Here is a 150-residue protein sequence, read N- to C-terminus: MPIVDSGSVAPLSAAEKTKIRSAWAPVYSNYETTGVDILVKFFTSTPAAQEFFPKFKGLTTADQLKKSADVRWHAERIINAVNDAVVSMDDTEKMSMKLGDLSGKHAKSFQVDPQYFKVLAAVIADTVAAGDAGFEKLMSMICILLRSAY.

The Globin domain occupies 11 to 150 (PLSAAEKTKI…MICILLRSAY (140 aa)). Residues His74 and His106 each contribute to the heme b site.

It belongs to the globin family. In terms of assembly, monomer.

The chain is Globin-3 from Petromyzon marinus (Sea lamprey).